A 208-amino-acid chain; its full sequence is CASP-like protein 4A4 (208 aa).

The Cytoplasmic segment spans residues 1–53; that stretch reads MKELKDHVVVITYGPSSEASVTASPVSQQTPSLFAYSVTPSASRFSSRRASVH. The chain crosses the membrane as a helical span at residues 54-74; sequence VIGLVLRFITMVLCFVSALSL. Topologically, residues 75 to 92 are extracellular; it reads AVNVQRPSKRHLTQNSSS. Residue N89 is glycosylated (N-linked (GlcNAc...) asparagine). Residues 93-113 form a helical membrane-spanning segment; that stretch reads FASYPELLYCFGVAVIGFVYT. Topologically, residues 114–141 are cytoplasmic; the sequence is SLQTFKGVCDITHRGVLISEPLSDYISF. Residues 142–162 traverse the membrane as a helical segment; the sequence is IFDQVICYLLVSSSSVAIAWI. Topologically, residues 163–176 are extracellular; that stretch reads QHINEDAIKTLRNN. N175 carries N-linked (GlcNAc...) asparagine glycosylation. A helical transmembrane segment spans residues 177 to 197; it reads SIVSVSMSFSAFLVLTLSGLL. Residues 198–208 are Cytoplasmic-facing; sequence SGYKLCKRFMW.

Belongs to the Casparian strip membrane proteins (CASP) family. In terms of assembly, homodimer and heterodimers.

Its subcellular location is the cell membrane. This chain is CASP-like protein 4A4, found in Arabidopsis thaliana (Mouse-ear cress).